Here is a 640-residue protein sequence, read N- to C-terminus: Probable threonine--tRNA ligase, cytoplasmic (640 aa).

The 63-residue stretch at methionine 1–threonine 63 folds into the TGS domain.

This sequence belongs to the class-II aminoacyl-tRNA synthetase family.

It localises to the cytoplasm. It carries out the reaction tRNA(Thr) + L-threonine + ATP = L-threonyl-tRNA(Thr) + AMP + diphosphate + H(+). In Encephalitozoon cuniculi (strain GB-M1) (Microsporidian parasite), this protein is Probable threonine--tRNA ligase, cytoplasmic.